Consider the following 160-residue polypeptide: Envelope glycoprotein L (160 aa).

The first 22 residues, 1–22 (MASHKWLLQMIVFLKTITIAYC), serve as a signal peptide directing secretion. The interval 24-149 (HLQDDTPLFF…TNIPENGCVW (126 aa)) is interaction with gH. In terms of domain architecture, gL alphaherpesvirus-type spans 28-160 (DTPLFFGAKP…ADRLFQRVCQ (133 aa)). Disulfide bonds link Cys-49–Cys-80 and Cys-147–Cys-159.

The protein belongs to the herpesviridae glycoprotein L (gL) family. Alphaherpesvirinae gL subfamily. As to quaternary structure, interacts with glycoprotein H (gH); this interaction is necessary for the correct processing and cell surface expression of gH. The heterodimer gH/gL seems to interact with gB trimers during fusion.

It is found in the virion membrane. The protein localises to the host cell membrane. It localises to the host Golgi apparatus. The protein resides in the host trans-Golgi network. The heterodimer glycoprotein H-glycoprotein L is required for the fusion of viral and plasma membranes leading to virus entry into the host cell. Acts as a functional inhibitor of gH and maintains gH in an inhibited form. Upon binding to host integrins, gL dissociates from gH leading to activation of the viral fusion glycoproteins gB and gH. This is Envelope glycoprotein L from Varicella-zoster virus (strain Oka vaccine) (HHV-3).